The sequence spans 420 residues: Putative competence-damage inducible protein (420 aa).

This sequence belongs to the CinA family.

This Halalkalibacterium halodurans (strain ATCC BAA-125 / DSM 18197 / FERM 7344 / JCM 9153 / C-125) (Bacillus halodurans) protein is Putative competence-damage inducible protein.